Here is a 101-residue protein sequence, read N- to C-terminus: MDEGISKKFAIQLLEDDAERIKMLIRNQKNSLCISQCKAFEEVVDTQMYGFSRQVTYATRLGILTNDEGHRLLSDLERELNQLYTDVYEETQEKNEIGKEG.

Belongs to the UPF0358 family.

The chain is UPF0358 protein EF_2458 from Enterococcus faecalis (strain ATCC 700802 / V583).